The chain runs to 73 residues: Structural DNA-binding protein p10 (73 aa).

The disordered stretch occupies residues 1 to 35 (MPTKAGTKSTAHKKTTTKGPSKSPKGKTHATALHQ).

This sequence belongs to the asfivirus P10 family.

Its subcellular location is the virion. Functionally, may play a role in genome packaging through direct interaction with viral DNA. Binds to ssDNA and dsDNA with the same apparent affinity in vitro. This chain is Structural DNA-binding protein p10, found in African swine fever virus (isolate Tick/Malawi/Lil 20-1/1983) (ASFV).